We begin with the raw amino-acid sequence, 394 residues long: 4-O-methyl-glucuronoyl methylesterase (394 aa).

An N-terminal signal peptide occupies residues 1-18 (MVHLTPALLLASAAFAAA). 3 disulfides stabilise this stretch: Cys-29–Cys-63, Cys-210–Cys-345, and Cys-242–Cys-317. Residues 209–214 (GCSRNG) carry the GXSYXG catalytic site motif motif. The Nucleophile role is filled by Ser-211. Residues Lys-215, Gln-257, Glu-265, and Trp-308 each coordinate substrate. His-344 serves as the catalytic Proton donor/acceptor.

It belongs to the carbohydrate esterase 15 (CE15) family.

The protein localises to the secreted. The catalysed reaction is a 4-O-methyl-alpha-D-glucuronosyl ester derivative + H2O = 4-O-methyl-alpha-D-glucuronate derivative + an alcohol + H(+). Functionally, glucuronoyl esterase which may play a significant role in biomass degradation, as it is considered to disconnect hemicellulose from lignin through the hydrolysis of the ester bond between 4-O-methyl-D-glucuronic acid residues of glucuronoxylans and aromatic alcohols of lignin. This Neurospora crassa (strain ATCC 24698 / 74-OR23-1A / CBS 708.71 / DSM 1257 / FGSC 987) protein is 4-O-methyl-glucuronoyl methylesterase.